The primary structure comprises 199 residues: MYEGVIQDLIDELGKLPGIGPKSAQRIAFHILGADPSQVRRLAEVLLDVKERIRFCAICGNVAEHEQCRICADPRRDPTVLCVVEEPKDVVAIEKTREFHGRYHVLGGAISPIDGIGPDDLRIRELLQRLADGTVKELILATDPNLEGEATATYLARLVKPLGVRVTRLASGLPVGGDLEYADEVTLGRALEGRRQLDV.

A C4-type zinc finger spans residues 56-71 (CAICGNVAEHEQCRIC). One can recognise a Toprim domain in the interval 79-174 (TVLCVVEEPK…RVTRLASGLP (96 aa)).

The protein belongs to the RecR family.

Functionally, may play a role in DNA repair. It seems to be involved in an RecBC-independent recombinational process of DNA repair. It may act with RecF and RecO. The protein is Recombination protein RecR of Acidothermus cellulolyticus (strain ATCC 43068 / DSM 8971 / 11B).